Consider the following 221-residue polypeptide: MSRRGDWVYENNGGTCVAIAGADYCVVAADTRLSVGYNILTRDHSKICELADKCALASSGFQGDIKALHKNLAARELLYQHQHNKRMSCPAMAQLLSNTLYYKRFFPYYAFNVLGGLDSEGKGCVFTYDAVGSYERTGYSAQGTGSALIMPVLDNQLKSPSPLLLPARDAVTPLSETEAVDLVKDVFASATERDIYTGDKLEIVVINKAGTKREYIDLRKD.

Belongs to the peptidase T1B family. The 26S proteasome consists of a 20S proteasome core and two 19S regulatory subunits. The 20S proteasome core is composed of 28 subunits that are arranged in four stacked rings, resulting in a barrel-shaped structure. The two end rings are each formed by seven alpha subunits, and the two central rings are each formed by seven beta subunits. The catalytic chamber with the active sites is on the inside of the barrel.

Its subcellular location is the cytoplasm. It localises to the nucleus. In terms of biological role, non-catalytic component of the proteasome, a multicatalytic proteinase complex which is characterized by its ability to cleave peptides with Arg, Phe, Tyr, Leu, and Glu adjacent to the leaving group at neutral or slightly basic pH. The proteasome has an ATP-dependent proteolytic activity. This is Proteasome subunit beta type-1 (PBF1) from Oryza sativa subsp. japonica (Rice).